The following is a 1032-amino-acid chain: Argonaute protein hrde-1 (1032 aa).

Disordered regions lie at residues 1-51 (MADL…PIGR) and 298-375 (KLSE…YSPS). The segment at 1–551 (MADLLDKIMG…IQMTAKLLPP (551 aa)) is required to recruit the small-RNA amplification machinery to gene targets and promote gene silencing. Basic and acidic residues predominate over residues 18–33 (PKRDNRMNQDKDEPTS). Residues 303–313 (KGGGGGRGGYG) are compositionally biased toward gly residues. 2 stretches are compositionally biased toward basic and acidic residues: residues 315 to 335 (SDSR…RDFR) and 343 to 364 (GNDR…RRDS). The 106-residue stretch at 376-481 (DAAELEHAFG…FPMELLRIAP (106 aa)) folds into the PAZ domain. The Piwi domain maps to 650-977 (DILVGIAREK…LAKRGRNNYK (328 aa)).

Belongs to the argonaute family. WAGO subfamily. In terms of tissue distribution, expressed in the nuclei of male and female germ cells.

The protein localises to the cytoplasm. It is found in the cytoplasmic ribonucleoprotein granule. The protein resides in the nucleus. Its function is as follows. Argonaute protein which is involved in the endogenous small interfering RNA (endo-siRNA) pathway and is required for RNA-mediated gene silencing (RNAi) in the germline. Interacts with secondary 22G-RNAs in an hrde-2-dependent manner; 22G-RNAs are RNA-dependent RNA polymerase-derived endo-siRNAs, typically 22 nucleotides in length with a 5'-guanosine residue. Plays a key role in transgenerational epigenetic inheritance and germline immortality. May be involved in transgenerational gene silencing both by inducing subnuclear-co-localization of target genes into heterochromatin and by activation of small RNA amplification in the nuage. This Caenorhabditis elegans protein is Argonaute protein hrde-1.